The primary structure comprises 151 residues: Probable flavodoxin 2 (151 aa).

Positions 4-144 constitute a Flavodoxin-like domain; it reads ILLVYATMSG…ELINFGRQFA (141 aa). FMN contacts are provided by residues 10–14 and 88–119; these read TMSGN and VFGSGDTAYEFFCGAVDTLEAKIKERGGDIVL.

It belongs to the flavodoxin family. The cofactor is FMN.

In terms of biological role, low-potential electron donor to a number of redox enzymes. The protein is Probable flavodoxin 2 (ykuP) of Bacillus subtilis (strain 168).